Here is an 87-residue protein sequence, read N- to C-terminus: MDKIRKQEIIAKHARHEGDTGSPEVQIALLTERINSLTDHLRTHKKDHHSRRGLLMMVGQRRGLLNYLYEQDIERYRAIIKELGLRR.

It belongs to the universal ribosomal protein uS15 family. In terms of assembly, part of the 30S ribosomal subunit. Forms a bridge to the 50S subunit in the 70S ribosome, contacting the 23S rRNA.

Its function is as follows. One of the primary rRNA binding proteins, it binds directly to 16S rRNA where it helps nucleate assembly of the platform of the 30S subunit by binding and bridging several RNA helices of the 16S rRNA. In terms of biological role, forms an intersubunit bridge (bridge B4) with the 23S rRNA of the 50S subunit in the ribosome. This Clostridium perfringens (strain ATCC 13124 / DSM 756 / JCM 1290 / NCIMB 6125 / NCTC 8237 / Type A) protein is Small ribosomal subunit protein uS15.